The primary structure comprises 76 residues: Small proline-rich protein 2E (76 aa).

3 repeat units span residues 21–29 (KKCPEPCPH), 30–38 (PQCPEPCPP), and 39–47 (PKCPEPCPE). Positions 21–47 (KKCPEPCPHPQCPEPCPPPKCPEPCPE) are 3 X 9 AA approximate tandem repeats. Positions 52 to 76 (PSYQQKCPPVQPPPPCQQKCPPKSK) are disordered.

It belongs to the cornifin (SPRR) family. In terms of tissue distribution, expressed in uterus.

It localises to the cytoplasm. In terms of biological role, cross-linked envelope protein of keratinocytes. It is a keratinocyte protein that first appears in the cell cytosol, but ultimately becomes cross-linked to membrane proteins by transglutaminase. All that results in the formation of an insoluble envelope beneath the plasma membrane. This chain is Small proline-rich protein 2E (Sprr2e), found in Mus musculus (Mouse).